The chain runs to 713 residues: NAD(+) hydrolase SARM1 (713 aa).

The ARM 1 repeat unit spans residues 53 to 96 (DVQAVLDGSLPALRSAIRTLRSSKDTGDLEETRRAIAETFQLVE). NAD(+) is bound by residues tryptophan 99, arginine 106, 145-153 (EQILVSENR), and 186-189 (HMFK). ARM repeat units follow at residues 110–149 (EEIC…QILV), 151–189 (ENRD…HMFK), 192–231 (EETS…NCAM), 233–276 (GGHR…LAAN), 277–310 (REME…NMLD), 311–350 (SADS…VETS), and 355–398 (QRNT…EEVP). 2 consecutive SAM domains span residues 408–472 (WKSG…LKTY) and 478–537 (CDPN…ILSA). The 144-residue stretch at 552 to 695 (KGPDVFISYR…KILRFLEGCP (144 aa)) folds into the TIR domain. Residues 561–562 (RR) and glutamate 591 contribute to the NAD(+) site. Glutamate 634 is an active-site residue.

Belongs to the SARM1 family. As to quaternary structure, homooctamer; forms an octameric ring via SAM domains.

It is found in the cytoplasm. The protein resides in the cell projection. The protein localises to the axon. Its subcellular location is the dendrite. It localises to the synapse. It is found in the mitochondrion. It carries out the reaction NAD(+) + H2O = ADP-D-ribose + nicotinamide + H(+). The enzyme catalyses NAD(+) = cyclic ADP-beta-D-ribose + nicotinamide + H(+). The catalysed reaction is NADP(+) + H2O = ADP-D-ribose 2'-phosphate + nicotinamide + H(+). Autoinhibited: in the inactive state, the enzymatic TIR domain is held apart by the autoinhibiting ARM repeats. NAD(+)-binding to ARM repeats maintains an inactive state by promoting interaction between ARM repeats and the TIR domain, thereby facilitating inhibition of the enzymatic TIR domain. Following activation, possibly by nicotinamide mononucleotide (NMN), auto-inhibitory interactions are released, allowing self-association of the TIR domains and subsequent activation of the NAD(+) hydrolase (NADase) activity. Self-association of TIR domains is facilitated by the octamer of SAM domains. Functionally, NAD(+) hydrolase, which plays a key role in axonal degeneration following injury by regulating NAD(+) metabolism. Acts as a negative regulator of MYD88- and TRIF-dependent toll-like receptor signaling pathway by promoting Wallerian degeneration, an injury-induced form of programmed subcellular death which involves degeneration of an axon distal to the injury site. Wallerian degeneration is triggerred by NAD(+) depletion: in response to injury, SARM1 is activated and catalyzes cleavage of NAD(+) into ADP-D-ribose (ADPR), cyclic ADPR (cADPR) and nicotinamide; NAD(+) cleavage promoting cytoskeletal degradation and axon destruction. Also able to hydrolyze NADP(+), but not other NAD(+)-related molecules. Can activate neuronal cell death in response to stress. The chain is NAD(+) hydrolase SARM1 from Danio rerio (Zebrafish).